A 323-amino-acid polypeptide reads, in one-letter code: o-succinylbenzoate synthase (323 aa).

Lysine 134 serves as the catalytic Proton donor. Residues aspartate 162, glutamate 191, and aspartate 214 each contribute to the Mg(2+) site. Residue lysine 236 is the Proton acceptor of the active site.

The protein belongs to the mandelate racemase/muconate lactonizing enzyme family. MenC type 1 subfamily. The cofactor is a divalent metal cation.

It carries out the reaction (1R,6R)-6-hydroxy-2-succinyl-cyclohexa-2,4-diene-1-carboxylate = 2-succinylbenzoate + H2O. It participates in quinol/quinone metabolism; 1,4-dihydroxy-2-naphthoate biosynthesis; 1,4-dihydroxy-2-naphthoate from chorismate: step 4/7. The protein operates within quinol/quinone metabolism; menaquinone biosynthesis. Its function is as follows. Converts 2-succinyl-6-hydroxy-2,4-cyclohexadiene-1-carboxylate (SHCHC) to 2-succinylbenzoate (OSB). This Proteus mirabilis (strain HI4320) protein is o-succinylbenzoate synthase.